Reading from the N-terminus, the 206-residue chain is Thiamine-phosphate synthase (206 aa).

4-amino-2-methyl-5-(diphosphooxymethyl)pyrimidine is bound by residues 35–39 (QLRDK) and N67. Residues D68 and D87 each contribute to the Mg(2+) site. Position 106 (S106) interacts with 4-amino-2-methyl-5-(diphosphooxymethyl)pyrimidine. Position 132–134 (132–134 (TGT)) interacts with 2-[(2R,5Z)-2-carboxy-4-methylthiazol-5(2H)-ylidene]ethyl phosphate. Residue K135 coordinates 4-amino-2-methyl-5-(diphosphooxymethyl)pyrimidine. 2-[(2R,5Z)-2-carboxy-4-methylthiazol-5(2H)-ylidene]ethyl phosphate is bound by residues G163 and 183-184 (IS).

This sequence belongs to the thiamine-phosphate synthase family. The cofactor is Mg(2+).

The enzyme catalyses 2-[(2R,5Z)-2-carboxy-4-methylthiazol-5(2H)-ylidene]ethyl phosphate + 4-amino-2-methyl-5-(diphosphooxymethyl)pyrimidine + 2 H(+) = thiamine phosphate + CO2 + diphosphate. It carries out the reaction 2-(2-carboxy-4-methylthiazol-5-yl)ethyl phosphate + 4-amino-2-methyl-5-(diphosphooxymethyl)pyrimidine + 2 H(+) = thiamine phosphate + CO2 + diphosphate. It catalyses the reaction 4-methyl-5-(2-phosphooxyethyl)-thiazole + 4-amino-2-methyl-5-(diphosphooxymethyl)pyrimidine + H(+) = thiamine phosphate + diphosphate. It participates in cofactor biosynthesis; thiamine diphosphate biosynthesis; thiamine phosphate from 4-amino-2-methyl-5-diphosphomethylpyrimidine and 4-methyl-5-(2-phosphoethyl)-thiazole: step 1/1. Condenses 4-methyl-5-(beta-hydroxyethyl)thiazole monophosphate (THZ-P) and 2-methyl-4-amino-5-hydroxymethyl pyrimidine pyrophosphate (HMP-PP) to form thiamine monophosphate (TMP). This Methanospirillum hungatei JF-1 (strain ATCC 27890 / DSM 864 / NBRC 100397 / JF-1) protein is Thiamine-phosphate synthase.